Here is a 328-residue protein sequence, read N- to C-terminus: WUSCHEL-related homeobox 6 (328 aa).

A compositionally biased stretch (polar residues) spans 1-11; sequence MEGSSNSPDRQ. Positions 1–45 are disordered; that stretch reads MEGSSNSPDRQSSGGSPPEERGGGGSGGGGGRSAAGEPVRSRWTP. Residues 23 to 33 are compositionally biased toward gly residues; that stretch reads GGGSGGGGGRS. Residues 38 to 102 constitute a DNA-binding region (homeobox; WUS-type); the sequence is PVRSRWTPKP…NRRSRSRRRQ (65 aa).

This sequence belongs to the WUS homeobox family.

Its subcellular location is the nucleus. Transcription factor which may be involved in developmental processes. In Oryza sativa subsp. japonica (Rice), this protein is WUSCHEL-related homeobox 6 (WOX6).